The following is a 129-amino-acid chain: Small ribosomal subunit protein eS6 (129 aa).

Belongs to the eukaryotic ribosomal protein eS6 family.

The chain is Small ribosomal subunit protein eS6 from Archaeoglobus fulgidus (strain ATCC 49558 / DSM 4304 / JCM 9628 / NBRC 100126 / VC-16).